Consider the following 84-residue polypeptide: Defensin-like protein 172 (84 aa).

Residues 1–23 form the signal peptide; that stretch reads MAKASSTLVLSIIFLVMFALVEQ. 4 disulfide bridges follow: Cys27-Cys74, Cys34-Cys56, Cys40-Cys68, and Cys44-Cys70.

The protein belongs to the DEFL family.

It localises to the secreted. The chain is Defensin-like protein 172 (LCR60) from Arabidopsis thaliana (Mouse-ear cress).